Here is a 459-residue protein sequence, read N- to C-terminus: MSNRMWGGRFASGPAEIMEEINASIGFDKRLAPQDIRGSLAHVAMLGKAGILPAEDVAAIEAGLKSVRDEIEAGTFAFKRELEDIHMSVESRLTEIVGPAAGRLHTARSRNDQVATDMKLWVRDTLDSLDQQAADLQRALADKALKHADTVMPGFTHLQSAQPVTFGHHCLAYVEMLARDRGRFRDARARLNESPLGAAALAGTSFPIDRHATAAALGFDRPTANSLDSVADRDFALEALAAASICAVHLSRFAEELVVWTSAQFNFVRLSDGFTTGSSIMPQKRNPDAAELVRAKSGRIIGALTGLLIVMKGLPLAYSKDMQEDKEGTFDALQALSLCLAAMTGMVKDLEPNAEVLARAAGSGYATATDLADWLVRELGLPFRQAHHVTGRLVGVASAKGVGLEALSLPEMQEAEPRITEAVYAVLGVENSVASRTSYGGTAPDNVRRQAQAWIERLG.

This sequence belongs to the lyase 1 family. Argininosuccinate lyase subfamily.

It is found in the cytoplasm. It carries out the reaction 2-(N(omega)-L-arginino)succinate = fumarate + L-arginine. The protein operates within amino-acid biosynthesis; L-arginine biosynthesis; L-arginine from L-ornithine and carbamoyl phosphate: step 3/3. The sequence is that of Argininosuccinate lyase from Methylobacterium radiotolerans (strain ATCC 27329 / DSM 1819 / JCM 2831 / NBRC 15690 / NCIMB 10815 / 0-1).